Reading from the N-terminus, the 436-residue chain is MEKIIVRGGQKLNGTVKVEGAKNAVLPVIAASLLASEEKSVICDVPTLSDVYTINEVLRHLGADVHFENNEVTVNASYALQTEAPFEYVRKMRASVLVMGPLLARTGHARVALPGGCAIGSRPIDQHLKGFEAMGAEIKVGNGFIEAEVKGRLQGAKIYLDFPSVGATENLIMAAALAEGTTTLENVAKEPEIVDLANYINGMGGKIRGAGTGTIKIEGVEKLHGVKHHIIPDRIEAGTFMVAAAITEGNVLVKGAVPEHLTSLIAKMEEMGVTIKDEGEGLRVIGPKELKPIDIKTMPHPGFPTDMQSQMMALLLRASGTSMITETVFENRFMHAEEFRRMNGDIKIEGRSVIINGPVQLQGAEVAATDLRAGAALILAGLVAEGHTRVTELKHLDRGYVDFHQKLAALGADIERVNDESASEQENKEVVSDLNA.

Position 22–23 (22–23 (KN)) interacts with phosphoenolpyruvate. Position 93 (R93) interacts with UDP-N-acetyl-alpha-D-glucosamine. C117 serves as the catalytic Proton donor. Residue C117 is modified to 2-(S-cysteinyl)pyruvic acid O-phosphothioketal. UDP-N-acetyl-alpha-D-glucosamine-binding positions include 122 to 126 (RPIDQ), D306, and V328.

The protein belongs to the EPSP synthase family. MurA subfamily.

Its subcellular location is the cytoplasm. It catalyses the reaction phosphoenolpyruvate + UDP-N-acetyl-alpha-D-glucosamine = UDP-N-acetyl-3-O-(1-carboxyvinyl)-alpha-D-glucosamine + phosphate. Its pathway is cell wall biogenesis; peptidoglycan biosynthesis. Its function is as follows. Cell wall formation. Adds enolpyruvyl to UDP-N-acetylglucosamine. Essential for cell growth. This Bacillus subtilis (strain 168) protein is UDP-N-acetylglucosamine 1-carboxyvinyltransferase 1.